Consider the following 402-residue polypeptide: Plasminogen activator inhibitor 1 (402 aa).

Positions 1–23 are cleaved as a signal peptide; the sequence is MRMSLVFACLAMGLALTFAEGSA. Residues asparagine 232, asparagine 288, and asparagine 352 are each glycosylated (N-linked (GlcNAc...) asparagine).

This sequence belongs to the serpin family. Forms a heterodimer with TMPRSS7. Interacts with VTN. Binds LRP1B; binding is followed by internalization and degradation. Interacts with PPP1CB. In complex with PLAU/uPA, interacts with PLAUR/uPAR. Interacts with SORL1 and LRP1, either alone or in complex with PLAU; these interactions are abolished in the presence of LRPAP1/RAP. The ternary complex composed of PLAUR-PLAU-PAI1 also interacts with SORL1. Interacts with PLAT/tPA. Also interacts with SORL1, when complexed to PLAT/tPA.

It is found in the secreted. Serine protease inhibitor. Inhibits TMPRSS7. Is a primary inhibitor of tissue-type plasminogen activator (PLAT) and urokinase-type plasminogen activator (PLAU). As PLAT inhibitor, it is required for fibrinolysis down-regulation and is responsible for the controlled degradation of blood clots. As PLAU inhibitor, it is involved in the regulation of cell adhesion and spreading. Acts as a regulator of cell migration, independently of its role as protease inhibitor. It is required for stimulation of keratinocyte migration during cutaneous injury repair. It is involved in cellular and replicative senescence. Plays a role in alveolar type 2 cells senescence in the lung. Is involved in the regulation of cementogenic differentiation of periodontal ligament stem cells, and regulates odontoblast differentiation and dentin formation during odontogenesis. This is Plasminogen activator inhibitor 1 (SERPINE1) from Sus scrofa (Pig).